A 306-amino-acid chain; its full sequence is Methionyl-tRNA formyltransferase (306 aa).

109–112 contacts (6S)-5,6,7,8-tetrahydrofolate; sequence SILP.

It belongs to the Fmt family.

The catalysed reaction is L-methionyl-tRNA(fMet) + (6R)-10-formyltetrahydrofolate = N-formyl-L-methionyl-tRNA(fMet) + (6S)-5,6,7,8-tetrahydrofolate + H(+). Attaches a formyl group to the free amino group of methionyl-tRNA(fMet). The formyl group appears to play a dual role in the initiator identity of N-formylmethionyl-tRNA by promoting its recognition by IF2 and preventing the misappropriation of this tRNA by the elongation apparatus. This Herpetosiphon aurantiacus (strain ATCC 23779 / DSM 785 / 114-95) protein is Methionyl-tRNA formyltransferase.